A 418-amino-acid polypeptide reads, in one-letter code: Light-independent protochlorophyllide reductase subunit N (418 aa).

3 residues coordinate [4Fe-4S] cluster: Cys-17, Cys-42, and Cys-103.

It belongs to the BchN/ChlN family. Protochlorophyllide reductase is composed of three subunits; ChlL, ChlN and ChlB. Forms a heterotetramer of two ChlB and two ChlN subunits. [4Fe-4S] cluster is required as a cofactor.

It carries out the reaction chlorophyllide a + oxidized 2[4Fe-4S]-[ferredoxin] + 2 ADP + 2 phosphate = protochlorophyllide a + reduced 2[4Fe-4S]-[ferredoxin] + 2 ATP + 2 H2O. Its pathway is porphyrin-containing compound metabolism; chlorophyll biosynthesis (light-independent). In terms of biological role, component of the dark-operative protochlorophyllide reductase (DPOR) that uses Mg-ATP and reduced ferredoxin to reduce ring D of protochlorophyllide (Pchlide) to form chlorophyllide a (Chlide). This reaction is light-independent. The NB-protein (ChlN-ChlB) is the catalytic component of the complex. This is Light-independent protochlorophyllide reductase subunit N from Prochlorococcus marinus (strain SARG / CCMP1375 / SS120).